Reading from the N-terminus, the 698-residue chain is Na(+)/H(+) antiporter NhaS5 (698 aa).

The next 12 membrane-spanning stretches (helical) occupy residues 10 to 30, 35 to 55, 65 to 85, 100 to 120, 121 to 141, 156 to 176, 184 to 204, 222 to 242, 275 to 295, 300 to 320, 333 to 353, and 370 to 390; these read SNPLIDFTILLLVTLILPPIF, LPGLVGLLFAGIVLGKSGLGV, LFTDIGKIYLMFVAGLEIDMV, LTFAVPLLTGLAVGLTFGYSF, NASVLLGSLFASHTLLGYPIV, IGATIFTDIAALLVLAICISI, AGLVVQLVAIAVYSALVLIGF, QFLFVLLAVFLASVGSELINV, LFIPFFFIGIGLLLDLPAFLV, LFPLVVAIVVGLILSKGVAAI, GLTMWSLSIPQVAATLAAAVA, and VLNTIIVLMLITSIVGPLMTA.

This sequence belongs to the monovalent cation:proton antiporter 2 (CPA2) transporter (TC 2.A.37) family.

The protein resides in the membrane. Its function is as follows. Na(+)/H(+) antiporter. The chain is Na(+)/H(+) antiporter NhaS5 (nhaS5) from Synechocystis sp. (strain ATCC 27184 / PCC 6803 / Kazusa).